The following is a 555-amino-acid chain: Urocanate hydratase (555 aa).

Residues 51 to 52 (GG), Gln-129, 175 to 177 (GMG), Glu-195, Arg-200, 241 to 242 (NA), 262 to 266 (QTSAH), 272 to 273 (YL), and Tyr-321 each bind NAD(+). The active site involves Cys-409. An NAD(+)-binding site is contributed by Gly-491.

It belongs to the urocanase family. NAD(+) serves as cofactor.

Its subcellular location is the cytoplasm. The catalysed reaction is 4-imidazolone-5-propanoate = trans-urocanate + H2O. Its pathway is amino-acid degradation; L-histidine degradation into L-glutamate; N-formimidoyl-L-glutamate from L-histidine: step 2/3. Catalyzes the conversion of urocanate to 4-imidazolone-5-propionate. The protein is Urocanate hydratase of Rhizorhabdus wittichii (strain DSM 6014 / CCUG 31198 / JCM 15750 / NBRC 105917 / EY 4224 / RW1) (Sphingomonas wittichii).